The primary structure comprises 281 residues: Elongation factor 1-delta (281 aa).

An N-acetylalanine modification is found at Ala-2. Residue Lys-17 is modified to N6-acetyllysine. Phosphoserine occurs at positions 37, 40, 44, and 60. The residue at position 73 (Thr-73) is a Phosphothreonine. A leucine-zipper region spans residues Leu-80–Leu-115. Phosphoserine is present on residues Ser-86, Asn-91, Leu-94, and Ser-106. Lys-107 is modified (N6-acetyllysine). Position 117 is an N6-acetyllysine; alternate (Lys-117). N6-succinyllysine; alternate is present on Lys-117. Positions Ser-118–Ala-172 are disordered. Ser-119 carries the post-translational modification Phosphoserine. Thr-129 is subject to Phosphothreonine. Ser-133 carries the phosphoserine modification. Thr-147 carries the post-translational modification Phosphothreonine. The span at Ala-149–Lys-169 shows a compositional bias: acidic residues. Phosphoserine; by CK2 is present on Ser-162. Residues Gln-173–Ile-281 are catalytic (GEF).

It belongs to the EF-1-beta/EF-1-delta family. EF-1 is composed of 4 subunits: alpha, beta, delta isoform 1, and gamma. Isoform 2 interacts with HSF1 and NFE2L2. In terms of tissue distribution, isoform 2 is specifically expressed in brain, cerebellum and testis.

It is found in the nucleus. Functionally, EF-1-beta and EF-1-delta stimulate the exchange of GDP bound to EF-1-alpha to GTP, regenerating EF-1-alpha for another round of transfer of aminoacyl-tRNAs to the ribosome. Regulates induction of heat-shock-responsive genes through association with heat shock transcription factors and direct DNA-binding at heat shock promoter elements (HSE). This chain is Elongation factor 1-delta (EEF1D), found in Homo sapiens (Human).